Here is a 338-residue protein sequence, read N- to C-terminus: MYNNNQNHHNNDNNMNKDEPTTIYPEFISISNEIKTNGSTNSYLNNIRREMLSMVNSGNNNNNNNNNNNNNNNNNNNNNNNNNDSIVINMDTINNNNNSNNIDINKSGYSQISNTTSNDNLNKTLLGNNEISQINDIDDDSSPEFIKYKKFISSLSYITFIGAAIVLINQKKSVYIQFHAYQSFYISMGVIGFQFLLIWSDILSIILWSLYLLFTIFMFLKVSFGGYGNSTIYKLPIIGNLSEQKAKLRSQEYSRYFKYHEDLFIKELREHKQALIHQSNLNRNNNNSNNVNNNGHQRINSNSSSVVMSGDVESMLNSSGSNSSIYSDVQNDIGTNEE.

The tract at residues 1 to 20 is disordered; sequence MYNNNQNHHNNDNNMNKDEP. A compositionally biased stretch (basic and acidic residues) spans 9-20; the sequence is HNNDNNMNKDEP. N-linked (GlcNAc...) asparagine glycosylation is found at asparagine 37, asparagine 83, asparagine 97, asparagine 105, asparagine 114, and asparagine 122. The interval 55 to 92 is disordered; sequence VNSGNNNNNNNNNNNNNNNNNNNNNNNNNDSIVINMDT. The segment covering 59–92 has biased composition (low complexity); sequence NNNNNNNNNNNNNNNNNNNNNNNNNDSIVINMDT. Transmembrane regions (helical) follow at residues 148–168, 178–198, and 202–222; these read YKKF…IVLI, FHAY…FLLI, and ILSI…FLKV. Asparagine 229, asparagine 240, asparagine 286, asparagine 302, asparagine 317, and asparagine 322 each carry an N-linked (GlcNAc...) asparagine glycan. 2 disordered regions span residues 279-303 and 316-338; these read SNLN…NSNS and LNSS…TNEE. Low complexity predominate over residues 280-294; that stretch reads NLNRNNNNSNNVNNN. The segment covering 316-327 has biased composition (low complexity); sequence LNSSGSNSSIYS. Over residues 328-338 the composition is skewed to polar residues; it reads DVQNDIGTNEE.

It localises to the membrane. This is an uncharacterized protein from Dictyostelium discoideum (Social amoeba).